The sequence spans 1093 residues: Leucine-rich repeats and immunoglobulin-like domains protein 1 (1093 aa).

Residues 1-34 (MARPVRGGLGAPRRSPCLLLLWLLLLRLEPVTAA) form the signal peptide. The 34-residue stretch at 35–68 (AGPRAPCAAACTCAGDSLDCGGRGLAALPGDLPS) folds into the LRRNT domain. The Extracellular portion of the chain corresponds to 35-794 (AGPRAPCAAA…GCRKDGTTVG (760 aa)). Residues Cys45 and Cys54 are joined by a disulfide bond. LRR repeat units follow at residues 69 to 90 (WTRS…GFED), 93 to 114 (NLQE…GAAS), 116 to 137 (HVVS…QLKA), 140 to 161 (SLEV…CFPH), 164 to 185 (PIKE…AFDG), 189 to 210 (SLLT…AFKL), 212 to 233 (RLTQ…TFQG), 236 to 257 (SLEV…AFWG), 260 to 281 (KMHV…SLYG), 284 to 305 (ALHQ…GWSF), 308 to 329 (KLHE…SLAE), 332 to 353 (SLSV…AFKG), 356 to 378 (SLRV…SGAF), 383 to 404 (SLSK…AFSG), and 407 to 428 (GLEH…AFVK). Asn74 carries an N-linked (GlcNAc...) asparagine glycan. An N-linked (GlcNAc...) asparagine glycan is attached at Asn150. N-linked (GlcNAc...) asparagine glycosylation occurs at Asn246. N-linked (GlcNAc...) asparagine glycans are attached at residues Asn292 and Asn318. In terms of domain architecture, LRRCT spans 440 to 491 (DSFLCDCQLKWLPPWLIGRMLQAFVTATCAHPESLKGQSIFSVPPESFVCDD). 4 disulfides stabilise this stretch: Cys444–Cys468, Cys446–Cys489, Cys516–Cys577, and Cys620–Cys672. 3 consecutive Ig-like C2-type domains span residues 495–594 (PQII…ARLT), 599–688 (PSFT…ATLT), and 693–779 (PSLV…SQLS). Residue Asn684 is glycosylated (N-linked (GlcNAc...) asparagine). Cysteines 714 and 763 form a disulfide. A helical membrane pass occupies residues 795-815 (IFTIAVVSSIVLTSLVWVCII). The Cytoplasmic portion of the chain corresponds to 816–1093 (YQTRKKSEEY…RVPLLLAPKS (278 aa)). 2 disordered regions span residues 946 to 983 (AFHP…CSRT) and 1063 to 1093 (PKAC…APKS).

Interacts (via extracellular LRR and Ig-like domains) with EGFR/ERBB1, ERBB2, ERBB3 and ERBB4 (via extracellular domain). The physiological relevance of the interaction is controversial; LRIG1 may have low affinity for EGFR, and interaction may occur only when high levels of both proteins are present. As to expression, widely expressed.

The protein resides in the cell membrane. In terms of biological role, acts as a feedback negative regulator of signaling by receptor tyrosine kinases, through a mechanism that involves enhancement of receptor ubiquitination and accelerated intracellular degradation. The protein is Leucine-rich repeats and immunoglobulin-like domains protein 1 of Homo sapiens (Human).